A 305-amino-acid chain; its full sequence is Olfactory receptor 9G1 (305 aa).

Residues 1-24 (MQRSNHTVTEFILLGFTTDPGMQL) lie on the Extracellular side of the membrane. N-linked (GlcNAc...) asparagine glycosylation is present at asparagine 5. Residues 25 to 45 (GLFVVFLGVYSLTVVGNSTLI) form a helical membrane-spanning segment. Over 46-53 (VLICNDSC) the chain is Cytoplasmic. A helical transmembrane segment spans residues 54–74 (LHTPMYFFTGNLSFLDLWYSS). The Extracellular segment spans residues 75-98 (VYTPKILVTCISEDKSISFAGCLC). Residues cysteine 96 and cysteine 188 are joined by a disulfide bond. The chain crosses the membrane as a helical span at residues 99–119 (QFFFSAGLAYSECYLLAAVAY). At 120–138 (DRYVAISKPLLYAQAMSIK) the chain is on the cytoplasmic side. Residues 139–159 (LCALLVAVSYCGGFINSSIIT) traverse the membrane as a helical segment. At 160 to 196 (KKTFSFNFCRENIIDDFFCDLLPLVELACGEKGGYKI) the chain is on the extracellular side. A helical transmembrane segment spans residues 197 to 216 (MMYFLLASNVICPAVLILAS). Residues 217–236 (YLFIITSVLRISSSKGYLKA) lie on the Cytoplasmic side of the membrane. A helical transmembrane segment spans residues 237-257 (FSTCSSHLTSVTLYYGSILYI). Residues 258-270 (YALPRSSYSFDMD) lie on the Extracellular side of the membrane. The helical transmembrane segment at 271-291 (KIVSTFYTVVFPMLNLMIYSL) threads the bilayer. The Cytoplasmic segment spans residues 292–305 (RNKDVKEALKKLLP).

This sequence belongs to the G-protein coupled receptor 1 family.

It localises to the cell membrane. Functionally, odorant receptor. The polypeptide is Olfactory receptor 9G1 (OR9G1) (Homo sapiens (Human)).